The chain runs to 523 residues: MAAHRSWLLVSFFLLEVLLLEAAKILTISTLSASHYILMNRVSQILQGGGHDVIKLLYEGGDIPDFRKENSSYQVINWRLPEDQQKTFENRWHRLIDEYAYGRSKYHTLLKIHQYFADLCSHLLSRKDIMELLQKENFDLVLLDSMDLCSFLIVEKLGKRFVSFLPFQFSYMDFGLPNAPLSYAPVYGSGLTDQMDFWGRVKNILMFFHFTKKRRDIFSQYGNTVQEHFAEGSQPVLSDLLLKAELWFVNSDFALDFARPLFPNTVYVGGLLDKPVQPIPQDLEDFISQFGDSGFVLVALGSVVSMIQSKEIIKEMNSAFAHLPQGVLWTCKSSHWPKDVSLAPNVKIMDWLPQIDLLAHPSIRLFVTHGGMNSVMEAVHHGVPMVGIPFFGDQPENMVRVEAKNLGVSIQLQTLKAESFLLTMKEVIEDQRYKTAAMASKVIRQSHPLTPAQRLVGWIDHILQTGGAAHLKPYAFQQPWHEQYMLDVFLFLLGLTLGTLWLSVKVLVAVTRYLSISRKVKQA.

A signal peptide spans 1–22 (MAAHRSWLLVSFFLLEVLLLEA). The Extracellular portion of the chain corresponds to 23–487 (AKILTISTLS…QPWHEQYMLD (465 aa)). Residue asparagine 70 is glycosylated (N-linked (GlcNAc...) asparagine). Residues 488-508 (VFLFLLGLTLGTLWLSVKVLV) form a helical membrane-spanning segment. The Cytoplasmic segment spans residues 509-523 (AVTRYLSISRKVKQA).

Belongs to the UDP-glycosyltransferase family. In terms of tissue distribution, highly expressed in kidney, while it is expressed at low levels in liver. Not detected in other tissues examined.

It is found in the membrane. It catalyses the reaction glucuronate acceptor + UDP-alpha-D-glucuronate = acceptor beta-D-glucuronoside + UDP + H(+). Its function is as follows. UDP-glucuronosyltransferases catalyze phase II biotransformation reactions in which lipophilic substrates are conjugated with glucuronic acid to increase water solubility and enhance excretion. They are of major importance in the conjugation and subsequent elimination of potentially toxic xenobiotics and endogenous compounds. The protein is UDP-glucuronosyltransferase 3A1 (Ugt3a1) of Mus musculus (Mouse).